Consider the following 351-residue polypeptide: Heat-inducible transcription repressor HrcA (351 aa).

The protein belongs to the HrcA family.

In terms of biological role, negative regulator of class I heat shock genes (grpE-dnaK-dnaJ and groELS operons). Prevents heat-shock induction of these operons. The polypeptide is Heat-inducible transcription repressor HrcA (Mycoplasma pneumoniae (strain ATCC 29342 / M129 / Subtype 1) (Mycoplasmoides pneumoniae)).